The chain runs to 310 residues: UPF0761 membrane protein VSAL_I2938 (310 aa).

A run of 6 helical transmembrane segments spans residues 34 to 54 (YMAYITLLSLVPLVTVLLSVL), 97 to 117 (MTAVGSGFLFVASVMLISAID), 136 to 156 (FSLYWMILTLGPLLVWASLAA), 178 to 198 (LLGWLPIILSFSAFLGLYLLV), 207 to 227 (HALVGAMSAGCLFEVSKVGFA), and 242 to 262 (ALAAVPILFVWIYLCWIIVLI).

This sequence belongs to the UPF0761 family.

It localises to the cell inner membrane. The polypeptide is UPF0761 membrane protein VSAL_I2938 (Aliivibrio salmonicida (strain LFI1238) (Vibrio salmonicida (strain LFI1238))).